Here is a 1543-residue protein sequence, read N- to C-terminus: DNA-directed RNA polymerase subunit beta' (1543 aa).

The Zn(2+) site is built by cysteine 60, cysteine 62, cysteine 75, and cysteine 78. Positions 627, 629, and 631 each coordinate Mg(2+). Residues cysteine 1017, cysteine 1097, cysteine 1104, and cysteine 1107 each coordinate Zn(2+). 2 disordered regions span residues 1466 to 1490 and 1522 to 1543; these read PADR…APPR and AEEG…EENV.

The protein belongs to the RNA polymerase beta' chain family. In terms of assembly, the RNAP catalytic core consists of 2 alpha, 1 beta, 1 beta' and 1 omega subunit. When a sigma factor is associated with the core the holoenzyme is formed, which can initiate transcription. Mg(2+) is required as a cofactor. It depends on Zn(2+) as a cofactor.

It carries out the reaction RNA(n) + a ribonucleoside 5'-triphosphate = RNA(n+1) + diphosphate. Its function is as follows. DNA-dependent RNA polymerase catalyzes the transcription of DNA into RNA using the four ribonucleoside triphosphates as substrates. In Herpetosiphon aurantiacus (strain ATCC 23779 / DSM 785 / 114-95), this protein is DNA-directed RNA polymerase subunit beta'.